The sequence spans 103 residues: Acylphosphatase-2 (103 aa).

Ser2 is subject to N-acetylserine. The 91-residue stretch at 13-103 (SVDYEVFGRV…LDFSGFSTRY (91 aa)) folds into the Acylphosphatase-like domain. Residues Arg28 and Asn46 contribute to the active site.

The protein belongs to the acylphosphatase family.

The catalysed reaction is an acyl phosphate + H2O = a carboxylate + phosphate + H(+). In terms of biological role, its physiological role is not yet clear. The protein is Acylphosphatase-2 (ACYP2) of Anas platyrhynchos (Mallard).